The sequence spans 406 residues: Exodeoxyribonuclease 7 large subunit (406 aa).

Belongs to the XseA family. Heterooligomer composed of large and small subunits.

The protein resides in the cytoplasm. The enzyme catalyses Exonucleolytic cleavage in either 5'- to 3'- or 3'- to 5'-direction to yield nucleoside 5'-phosphates.. In terms of biological role, bidirectionally degrades single-stranded DNA into large acid-insoluble oligonucleotides, which are then degraded further into small acid-soluble oligonucleotides. The polypeptide is Exodeoxyribonuclease 7 large subunit (Desulforudis audaxviator (strain MP104C)).